We begin with the raw amino-acid sequence, 380 residues long: GATOR1 complex protein NPRL2 (380 aa).

The tract at residues Met1–Thr133 is interaction with PDPK1. A GDP-binding site is contributed by Arg78. Arg78 bears the Asymmetric dimethylarginine mark. Glycyl lysine isopeptide (Lys-Gly) (interchain with G-Cter in ubiquitin) cross-links involve residues Lys158 and Lys357.

The protein belongs to the NPR2 family. As to quaternary structure, within the GATOR complex, component of the GATOR1 subcomplex, made of DEPDC5, NPRL2 and NPRL3. GATOR1 mediates the strong interaction of the GATOR complex with small GTPases Rag (RagA/RRAGA, RagB/RRAGB, RagC/RRAGC and/or RagD/RRAGD) heterodimers. GATOR1 interacts with GPR155/LYCHOS; interaction takes place in presence of cholesterol and prevents interaction between GATOR1 and KICSTOR. Interacts with PDPK1. In terms of processing, in the presence of abundant amino acids, ubiquitinated at Lys-158 and Lys-357 via 'Lys-6'-linked ubiquitination by the WDR24 component of the GATOR2 complex, thereby inhibiting the GATOR1 complex and promoting mTORC1 activation. Asymmetric dimethylation at Arg-78 by PRMT1 inhibits the GTPase activator activity of the GATOR1 complex and consequently inducing timely mTORC1 activation under methionine-sufficient conditions.

It localises to the lysosome membrane. Functionally, catalytic component of the GATOR1 complex, a multiprotein complex that functions as an inhibitor of the amino acid-sensing branch of the mTORC1 pathway. In response to amino acid depletion, the GATOR1 complex has GTPase activating protein (GAP) activity and strongly increases GTP hydrolysis by RagA/RRAGA (or RagB/RRAGB) within heterodimeric Rag complexes, thereby turning them into their inactive GDP-bound form, releasing mTORC1 from lysosomal surface and inhibiting mTORC1 signaling. In the presence of abundant amino acids, the GATOR1 complex is ubiquitinated and inhibited by GATOR2. Within the GATOR1 complex, NPRL2 constitutes the catalytic subunit that mediates the GTPase activator activity and under methionine-sufficient conditions, the GTPase activator activity is inhibited by PRMT1 through methylation and consequently inducing timely mTORC1 activation. Its function is as follows. Suppresses Src-dependent tyrosine phosphorylation and activation of PDPK1 and its downstream signaling. Down-regulates PDPK1 kinase activity by interfering with tyrosine phosphorylation at 'Tyr-9', 'Tyr-373' and 'Tyr-376' residues. May act as a tumor suppressor. Suppresses cell growth and enhances sensitivity to various anticancer drugs. This is GATOR1 complex protein NPRL2 from Mus musculus (Mouse).